The sequence spans 360 residues: Transcription factor MYB39 (360 aa).

HTH myb-type domains follow at residues 10–62 (DKGV…MNYL) and 63–117 (RPDI…RKKL). 2 DNA-binding regions (H-T-H motif) span residues 38–62 (WRSLPKLAGLNRCGKSCRLRWMNYL) and 90–113 (WSKIAGHLPGRTDNEIKNYWNTHM). The tract at residues 299–324 (PSTGSVSVSPETTSLNHPSTAQHSSG) is disordered.

It localises to the nucleus. This chain is Transcription factor MYB39 (MYB39), found in Arabidopsis thaliana (Mouse-ear cress).